Reading from the N-terminus, the 271-residue chain is MKFSKIACATVFALSSQAAIIHHAPEFNMKRDVAPAAPAAPADQAPTVPAPQEFNTAITKRSIIGIIMGILGNIPQVIQIIMSIVKAFKGNKREDIDSVVAGIIADMPFVVRAVDTAMTSVASTKRDGANDDVANAVVRLPEIVARVATGVQQSIENAKRDGVPDVGLNLVANAPRLISNVFDGVSETVQQAKRDGLEDFLDELLQRLPQLITRSAESALKDSQPVKRDAGSVALSNLIKKSIETVGIENAAQIVSERDISSLIEEYFGKA.

The signal sequence occupies residues methionine 1–alanine 18. Residues serine 62 to methionine 82 form a helical membrane-spanning segment.

In terms of assembly, polymerizes in solution to form membrane pores. Cleavage by KEX2 generates 8 peptides ECE1-I to ECE1-VIII, all terminating in Lys-Arg. Only peptide ECE1-III, called candidalysin, shows toxin activity.

It localises to the secreted. It is found in the host cell membrane. Its function is as follows. Secreted protein cleaved by KEX2 in 8 similar peptides (ECE1-I to ECE1-VIII). Stimulates biofilm formation. In terms of biological role, acts as a cytolytic peptide toxin that directly damages host epithelial membranes, triggers a danger response signaling pathway and activates epithelial immunity. Polymerizes in solution to form membrane pores to damage epithelial cells. Induces calcium influx, oxidative stress, mitochondrial dysfunction and ATP depletion in host cells, leading to epithelial necrosis. Serves as a danger signal that potentiates the immune response, and more specifically IL-17 response. Induces cytokine/chemokine secretion by host (especially CCL2/3/4, CXCL1 and S100A8), neutrophil recruitment, and promotes mortality in zebrafish and murine models of systemic fungal infection. Mediates distinct epithelial inflammatory responses through p38, EGFR-ERK and TREM-1/DAP12 pathways. Acts as one of the hypha-derived drivers of NLRP3 inflammasome responses in primary macrophages and thus contributes to the capacity to induce maturation and secretion of IL-1beta from primary macrophages. Stimulates mast cells by mediating cross-talk between signaling pathways activated by the dectin-1 receptor and MAPKs. Enables escape via the gasdermin-mediated pyroptosis, as well as a cell lysis pathway associated with macrophage extracellular trap formation termed ETosis. Acts as the main hemolytic factor of C.albicans. As an exotoxine, also promotes alcohol-associated liver disease or oral carcinogenesis. The chain is Extent of cell elongation protein 1 from Candida albicans (strain SC5314 / ATCC MYA-2876) (Yeast).